Reading from the N-terminus, the 138-residue chain is Large ribosomal subunit protein uL16 (138 aa).

Belongs to the universal ribosomal protein uL16 family. Part of the 50S ribosomal subunit.

Functionally, binds 23S rRNA and is also seen to make contacts with the A and possibly P site tRNAs. The polypeptide is Large ribosomal subunit protein uL16 (Syntrophobacter fumaroxidans (strain DSM 10017 / MPOB)).